Here is a 582-residue protein sequence, read N- to C-terminus: Aspartate--tRNA ligase (582 aa).

Glu174 contributes to the L-aspartate binding site. Residues 198–201 form an aspartate region; that stretch reads QITK. An L-aspartate-binding site is contributed by Arg220. Residues 220 to 222 and Gln229 contribute to the ATP site; that span reads RDE. His443 contributes to the L-aspartate binding site. Glu477 serves as a coordination point for ATP. Residue Arg484 participates in L-aspartate binding. 529–532 provides a ligand contact to ATP; sequence GLDR.

Belongs to the class-II aminoacyl-tRNA synthetase family. Type 1 subfamily. Homodimer.

The protein resides in the cytoplasm. The enzyme catalyses tRNA(Asp) + L-aspartate + ATP = L-aspartyl-tRNA(Asp) + AMP + diphosphate. In terms of biological role, catalyzes the attachment of L-aspartate to tRNA(Asp) in a two-step reaction: L-aspartate is first activated by ATP to form Asp-AMP and then transferred to the acceptor end of tRNA(Asp). The protein is Aspartate--tRNA ligase of Streptococcus pyogenes serotype M28 (strain MGAS6180).